Reading from the N-terminus, the 688-residue chain is Two-component response regulator ORR23 (688 aa).

The 116-residue stretch at 25–140 (RVLAVDDDPV…ELRNIWQHVI (116 aa)) folds into the Response regulatory domain. At aspartate 76 the chain carries 4-aspartylphosphate. A disordered region spans residues 161–212 (PPNADSDHVHGHVTCGSPDQSGRPSKKRKEYCSEEEDEGEVNTQDIDDPSAP). Over residues 193–208 (SEEEDEGEVNTQDIDD) the composition is skewed to acidic residues. Positions 211 to 270 (APKKPRVVWSVELHRKFVAAVNQLGIDKAVPKRILELMNVEKLTRENVASHLQKYRLYLK) form a DNA-binding region, myb-like GARP.

The protein belongs to the ARR family. Type-B subfamily. Post-translationally, two-component system major event consists of a His-to-Asp phosphorelay between a sensor histidine kinase (HK) and a response regulator (RR). In plants, the His-to-Asp phosphorelay involves an additional intermediate named Histidine-containing phosphotransfer protein (HPt). This multistep phosphorelay consists of a His-Asp-His-Asp sequential transfer of a phosphate group between first a His and an Asp of the HK protein, followed by the transfer to a conserved His of the HPt protein and finally the transfer to an Asp in the receiver domain of the RR protein.

Its subcellular location is the nucleus. Functionally, transcriptional activator that binds specific DNA sequence. Functions as a response regulator involved in His-to-Asp phosphorelay signal transduction system. Phosphorylation of the Asp residue in the receiver domain activates the ability of the protein to promote the transcription of target genes. May directly activate some type-A response regulators in response to cytokinins. This chain is Two-component response regulator ORR23, found in Oryza sativa subsp. indica (Rice).